Reading from the N-terminus, the 189-residue chain is MDHSAHMGMSTHMGMSDMNHSTTMPPSHHHPTSSGSHESMMMPMTFYFGFKKVEVLFAGLVINTAGEMAGAFVAVFLLAMFYEGLKIAREGLLRKSQVSIRYNSMPVPGPNGTILMETHKTVGQQMLSFPHLLQTVLHIIQVVISYFLMLIFMTYNGYLCIAVAAGAGTGYFLFSWKKAVVVDITEHCH.

At M1–E67 the chain is on the extracellular side. A Methionine segments (Mets) motif motif is present at residues M13–M18. Residues M15–S36 are disordered. A compositionally biased stretch (low complexity) spans H20 to S36. Residues M68–A88 form a helical membrane-spanning segment. The Cytoplasmic portion of the chain corresponds to R89 to H131. Residue T113 is modified to Phosphothreonine. The helical transmembrane segment at L132–F152 threads the bilayer. Residues M153–Y155 lie on the Extracellular side of the membrane. Residues N156 to W176 traverse the membrane as a helical segment. Over K177–H189 the chain is Cytoplasmic. The residue at position 188 (C188) is a Cysteine sulfenic acid (-SOH).

This sequence belongs to the copper transporter (Ctr) (TC 1.A.56) family. SLC31A subfamily. Homotrimer; is stabilized by cisplatin via interactions between cisplatin and the methionine-rich clusters, and could be crucial for the copper(2+) reduction process and copper(1+) stabilization. Heterotrimer between SLC31A1, CCS and SOD1; this heterotrimer is copper(1+)-mediated and its maintenance is regulated through SOD1 activation. Interacts with KDR; this interaction is induced upon VEGFA stimulation leading to SLC31A1 and KDR subsequent co-internalization to early endosomes, thereby activating KDR downstream signaling in endothelial cells. Interacts (via C-terminal domain) with ATOX1 (via dimer form); this interaction improves ATOX1 stability and controls intracellular copper(1+) levels. Interacts with SLC31A2; this interaction stabilizes SLC31A2 and protects its from ubiquitination and degradation. Interacts (via C-terminal domain) with CCS; this interaction is copper(1+)-mediated. Proteolytic cleavage, leading to a truncated form, is facilitated by SLC31A2 and initiated preferentially by CTSL and to a minor extend by CTSB in endolysosomal compartments. A post-CTSL/cathepsin L processing occurs to yield to the fully truncated form. Post-translationally, sulfenylated at Cys-188 after stimulation with VEGFA, which induces SLC31A1-KDR disulfide bond formation and their co-internalization to early endosomes, driving to a sustained VEGFR2 signaling.

The protein resides in the cell membrane. The protein localises to the early endosome membrane. It localises to the recycling endosome membrane. It is found in the apical cell membrane. Its subcellular location is the late endosome membrane. The protein resides in the basolateral cell membrane. It carries out the reaction Ag(+)(out) = Ag(+)(in). The catalysed reaction is Cu(+)(out) = Cu(+)(in). Uniporter that mediates the transport of copper(1+) from the extracellular space to the cytoplasm, across the plasma membrane and delivers directly copper(1+) to specific chaperone such as ATOX1, via a copper(1+)- mediated transient interaction between the C-terminal domain and a copper(1+) chaperone, thus controlling intracellular copper(1+) levels. May function in copper(1+) import from the apical membrane thus may drive intestinal copper absorption. The copper(1+) transport mechanism is sodium-independent, saturable and of high-affinity. Also mediates the uptake of silver(1+). May function in the influx of the platinum-containing chemotherapeutic agents. The platinum-containing chemotherapeutic agents uptake is saturable. In vitro, mediates the transport of cadmium(2+) into cells. Also participates in the first step of copper(2+) acquisition by cells through a direct transfer of copper(2+) from copper(2+) carriers in blood, such as ALB to the N-terminal domain of SLC31A1, leading to copper(2+) reduction and probably followed by copper(1+) stabilization. In addition, functions as a redox sensor to promote angiogenesis in endothelial cells, in a copper(1+) transport independent manner, by transmitting the VEGF-induced ROS signal through a sulfenylation at Cys-189 leadin g to a subsequent disulfide bond formation between SLC31A1 and KDR. The SLC31A1-KDR complex is then co-internalized to early endosomes, driving a sustained VEGFR2 signaling. Functionally, mobilizes copper(1+) out of the endosomal compartment, making copper(1+) available for export out of the cells. This chain is High affinity copper uptake protein 1, found in Sus scrofa (Pig).